A 329-amino-acid chain; its full sequence is L-threonine dehydratase catabolic TdcB (329 aa).

AMP is bound at residue 53 to 54 (RT). Lys58 carries the N6-(pyridoxal phosphate)lysine modification. Residues Gln88, 119–120 (DY), and Asn314 contribute to the AMP site.

This sequence belongs to the serine/threonine dehydratase family. In terms of assembly, in the native structure, TdcB is in a dimeric form, whereas in the TdcB-AMP complex, it exists in a tetrameric form (dimer of dimers). It depends on pyridoxal 5'-phosphate as a cofactor.

It catalyses the reaction L-threonine = 2-oxobutanoate + NH4(+). The catalysed reaction is L-serine = pyruvate + NH4(+). The protein operates within amino-acid degradation; L-threonine degradation via propanoate pathway; propanoate from L-threonine: step 1/4. Its activity is regulated as follows. Each protein molecule can bind up to four molecules of AMP, which act as an allosteric activator to the enzyme. In terms of biological role, catalyzes the anaerobic formation of alpha-ketobutyrate and ammonia from threonine in a two-step reaction. The first step involved a dehydration of threonine and a production of enamine intermediates (aminocrotonate), which tautomerizes to its imine form (iminobutyrate). Both intermediates are unstable and short-lived. The second step is the nonenzymatic hydrolysis of the enamine/imine intermediates to form 2-ketobutyrate and free ammonia. In the low water environment of the cell, the second step is accelerated by RidA. TdcB also dehydrates serine to yield pyruvate via analogous enamine/imine intermediates. The chain is L-threonine dehydratase catabolic TdcB (tdcB) from Escherichia coli O157:H7.